Here is a 752-residue protein sequence, read N- to C-terminus: Cation-transporting P-type ATPase B (752 aa).

The HMA domain occupies 15–78 (RRIRLDVLGM…VVEKAGYHAA (64 aa)). 2 residues coordinate a metal cation: Cys-26 and Cys-29. The next 6 helical transmembrane spans lie at 105 to 125 (LLVA…FAIV), 132 to 152 (GWGY…AWPF), 167 to 187 (METL…SSVF), 201 to 221 (AILN…VFVL), 361 to 381 (IAGV…AAWL), and 390 to 410 (AFSV…GLAT). Asp-446 functions as the 4-aspartylphosphate intermediate in the catalytic mechanism. The next 2 helical transmembrane spans lie at 491–511 (MAAA…FVAV) and 714–734 (AIPI…AMAF).

It belongs to the cation transport ATPase (P-type) (TC 3.A.3) family. Type IB subfamily.

The protein resides in the cell membrane. The catalysed reaction is ATP + H2O = ADP + phosphate + H(+). The sequence is that of Cation-transporting P-type ATPase B (ctpB) from Mycobacterium tuberculosis (strain ATCC 25618 / H37Rv).